The primary structure comprises 548 residues: Membrane protein insertase YidC (548 aa).

The chain crosses the membrane as a helical span at residues 6 to 26 (NLLVIALLFVSFMIWQAWEQD). Residues 28–55 (NPQPQAQQTTQTTTTAAGSAADQGVPAS) form a disordered region. Over residues 30–50 (QPQAQQTTQTTTTAAGSAADQ) the composition is skewed to low complexity. Helical transmembrane passes span 350-370 (FVGNWGFSIIIITFIVRGIMY), 420-440 (LGGCFPLLIQMPIFLALYYML), 458-478 (LSAQDPYYILPILMGVTMFFI), and 499-519 (PVIFTVFFLWFPSGLVLYYIV).

It belongs to the OXA1/ALB3/YidC family. Type 1 subfamily. In terms of assembly, interacts with the Sec translocase complex via SecD. Specifically interacts with transmembrane segments of nascent integral membrane proteins during membrane integration.

The protein localises to the cell inner membrane. Required for the insertion and/or proper folding and/or complex formation of integral membrane proteins into the membrane. Involved in integration of membrane proteins that insert both dependently and independently of the Sec translocase complex, as well as at least some lipoproteins. Aids folding of multispanning membrane proteins. This Shigella flexneri protein is Membrane protein insertase YidC.